The sequence spans 509 residues: Cobyric acid synthase (509 aa).

Positions 262-459 (EIKVGIIKLP…IHGIFENDSW (198 aa)) constitute a GATase cobBQ-type domain. The active-site Nucleophile is the Cys-343. The active site involves His-451.

It belongs to the CobB/CobQ family. CobQ subfamily.

It participates in cofactor biosynthesis; adenosylcobalamin biosynthesis. Its function is as follows. Catalyzes amidations at positions B, D, E, and G on adenosylcobyrinic A,C-diamide. NH(2) groups are provided by glutamine, and one molecule of ATP is hydrogenolyzed for each amidation. This chain is Cobyric acid synthase, found in Prochlorococcus marinus (strain MIT 9301).